We begin with the raw amino-acid sequence, 543 residues long: Glucose-6-phosphate isomerase (543 aa).

The active-site Proton donor is the E353. Catalysis depends on residues H384 and K504.

Belongs to the GPI family.

Its subcellular location is the cytoplasm. The enzyme catalyses alpha-D-glucose 6-phosphate = beta-D-fructose 6-phosphate. The protein operates within carbohydrate biosynthesis; gluconeogenesis. It functions in the pathway carbohydrate degradation; glycolysis; D-glyceraldehyde 3-phosphate and glycerone phosphate from D-glucose: step 2/4. Catalyzes the reversible isomerization of glucose-6-phosphate to fructose-6-phosphate. The sequence is that of Glucose-6-phosphate isomerase from Roseiflexus sp. (strain RS-1).